The following is an 83-amino-acid chain: Toxin CjTL8 (83 aa).

Positions 1–20 (MSSAIKILALLMVLVALAQA) are cleaved as a signal peptide. The propeptide occupies 21 to 44 (KPRKDYRAYPDFDDKSVILEDDKR). Phenylalanine 81 carries the post-translational modification Phenylalanine amide.

Contains 3 disulfide bonds.

Its subcellular location is the secreted. It localises to the nematocyst. In terms of biological role, in vivo, induces immediate paralysis on shrimps (C.multidentata), followed by death when high doses are injected. No activity is observed when injected into fly larvae (M.domestica). This Epiactis japonica (Sea anemone) protein is Toxin CjTL8.